Here is a 152-residue protein sequence, read N- to C-terminus: RxLR effector protein Avrblb1 (152 aa).

An N-terminal signal peptide occupies residues 1–24; sequence MRSLLLTVLLNLVVLLATTGAVSS. The RxLR-dEER signature appears at 51 to 72; the sequence is RSLRGDYNNEVTKEPNTSDEER. The RGD RLK-binding motif motif lies at 54-56; the sequence is RGD. N66 carries N-linked (GlcNAc...) asparagine glycosylation. The interval 99–152 is w motif; sequence QSKTVLRYEDKLFTALYKSGETPRSLRTKHLDKASASVFFNRFKKWYDKNVGPS.

Belongs to the RxLR effector family. In terms of assembly, interacts with host defense protein RGA2/Rpi-blb1. Interacts with host legume-type lectin receptor kinase LECRK19.

Its subcellular location is the secreted. It is found in the host nucleus. The protein localises to the host nucleolus. It localises to the host cell membrane. In terms of biological role, secreted effector that acts as an elicitor of hypersensitive response (HR) specifically on plants carrying defense protein RGA2/Rpi-blb1. Enhances P.infestans colonization of plant hosts Nicotiana benthamiana and potato Solanum bulbocastanum leaves. Associates with host legume-type lectin receptor kinases and disrupts attachments between the host plasma membrane and cell wall. The sequence is that of RxLR effector protein Avrblb1 from Phytophthora infestans (strain T30-4) (Potato late blight agent).